Reading from the N-terminus, the 398-residue chain is MALRSLFLPNAFPNASSFRGGSRRGAAPRAMPIVMKSNVEVGARNEIAKKPFTPPFEIHEQITHSLPPEKIEIFKSLEGWATDNILIHLRPVEKSWQPQDYLPDPSAESFHDQVKELRQRSKEIPDDYFVALVGDMITEEALPTYQTMLNTLDGVRDETGASLTSWAVWTRAWTAEENRHGDLLNKYLYLTGRVDMRQIEKTIQYLIGSGMDPRTENNPYLGFIYTSFQERATSISHGNTARHAKDYGDLSLAQVCGIIASDEKRHEKAYTKIIEKLFEIDPDATVLAFADMMKKKISMPAHLMYDGRDDNLFKHFSSVAQRLGVYTAKDYADILEFLVERWNVEELTGLSSEGRKAQDYVCTLVPRIRKVDERAQGMAKKGGQTMRFSWIHDREVML.

A chloroplast-targeting transit peptide spans M1 to R29. Fe cation contacts are provided by E139, E177, H180, E230, E263, and H266.

Belongs to the fatty acid desaturase type 2 family. In terms of assembly, homodimer. Fe(2+) serves as cofactor. Preferentially expressed in the flower labellum. Low expression in leaves.

It localises to the plastid. It is found in the chloroplast stroma. The enzyme catalyses hexadecanoyl-[ACP] + 2 reduced [2Fe-2S]-[ferredoxin] + O2 + 2 H(+) = (4Z)-hexadecenoyl-[ACP] + 2 oxidized [2Fe-2S]-[ferredoxin] + 2 H2O. It functions in the pathway lipid metabolism; fatty acid metabolism. Functionally, converts palmitoyl-ACP to (4Z)-hexadec-4-enoyl-ACP by introduction of a cis double bond between carbons 4 and 5 of the acyl chain. The chain is Palmitoyl-[acyl-carrier-protein] 4-desaturase 3, chloroplastic (SAD3) from Ophrys arachnitiformis subsp. archipelagi (Orchid).